Consider the following 340-residue polypeptide: Protein HP_1247 (340 aa).

Seems to interact with H.pylori HolB.

Could be the functional equivalent of DNA polymerase III delta subunit (HolA). This chain is Protein HP_1247, found in Helicobacter pylori (strain ATCC 700392 / 26695) (Campylobacter pylori).